We begin with the raw amino-acid sequence, 887 residues long: Lateral signaling target protein 2 homolog (887 aa).

Lys87 is covalently cross-linked (Glycyl lysine isopeptide (Lys-Gly) (interchain with G-Cter in ubiquitin)). Residues 308–327 are disordered; that stretch reads PALSAPLPPEGPLSAKAKDP. The residue at position 334 (Ser334) is a Phosphoserine. 2 disordered regions span residues 354 to 396 and 412 to 474; these read DEMS…GSDE and ALAR…ASLA. Position 516 is a phosphothreonine (Thr516). Ser586 is subject to Phosphoserine; by MAP2K. Residues 599–714 are disordered; that stretch reads LAKASDRAPE…THAAPQATRE (116 aa). Basic and acidic residues predominate over residues 602–612; that stretch reads ASDRAPERQEE. A compositionally biased stretch (polar residues) spans 638-648; sequence TSGSQVDTASG. 2 stretches are compositionally biased toward low complexity: residues 681-693 and 700-711; these read SGSS…SCSS and AAPAATHAAPQA. Residues 817 to 879 form an FYVE-type zinc finger; sequence DEACGFCTAC…THCYMFHVTP (63 aa). Positions 823, 826, 839, 842, 847, 850, and 869 each coordinate Zn(2+). Thr870 carries the post-translational modification Phosphothreonine; by MAP2K. Position 872 (Cys872) interacts with Zn(2+).

It belongs to the lst-2 family. Interacts with TRIM3. In terms of processing, monoubiquitination at Lys-87 prevents binding to phosphatidylinositol 3-phosphate (PI3P) and localization to early endosome membranes.

The protein localises to the cytoplasm. It localises to the cytosol. It is found in the early endosome membrane. In terms of biological role, negative regulator of epidermal growth factor receptor (EGFR) signaling. Acts by promoting EGFR degradation in endosomes when not monoubiquitinated. The polypeptide is Lateral signaling target protein 2 homolog (ZFYVE28) (Homo sapiens (Human)).